The primary structure comprises 358 residues: 4-hydroxy-3-methylbut-2-en-1-yl diphosphate synthase (flavodoxin) (358 aa).

Cys270, Cys273, Cys305, and Glu312 together coordinate [4Fe-4S] cluster.

This sequence belongs to the IspG family. Requires [4Fe-4S] cluster as cofactor.

It carries out the reaction (2E)-4-hydroxy-3-methylbut-2-enyl diphosphate + oxidized [flavodoxin] + H2O + 2 H(+) = 2-C-methyl-D-erythritol 2,4-cyclic diphosphate + reduced [flavodoxin]. Its pathway is isoprenoid biosynthesis; isopentenyl diphosphate biosynthesis via DXP pathway; isopentenyl diphosphate from 1-deoxy-D-xylulose 5-phosphate: step 5/6. Functionally, converts 2C-methyl-D-erythritol 2,4-cyclodiphosphate (ME-2,4cPP) into 1-hydroxy-2-methyl-2-(E)-butenyl 4-diphosphate. In Vesicomyosocius okutanii subsp. Calyptogena okutanii (strain HA), this protein is 4-hydroxy-3-methylbut-2-en-1-yl diphosphate synthase (flavodoxin).